The primary structure comprises 515 residues: ATP synthase subunit alpha (515 aa).

171 to 178 (GDRQTGKT) contributes to the ATP binding site.

The protein belongs to the ATPase alpha/beta chains family. As to quaternary structure, F-type ATPases have 2 components, CF(1) - the catalytic core - and CF(0) - the membrane proton channel. CF(1) has five subunits: alpha(3), beta(3), gamma(1), delta(1), epsilon(1). CF(0) has three main subunits: a(1), b(2) and c(9-12). The alpha and beta chains form an alternating ring which encloses part of the gamma chain. CF(1) is attached to CF(0) by a central stalk formed by the gamma and epsilon chains, while a peripheral stalk is formed by the delta and b chains.

The protein resides in the cell inner membrane. The enzyme catalyses ATP + H2O + 4 H(+)(in) = ADP + phosphate + 5 H(+)(out). In terms of biological role, produces ATP from ADP in the presence of a proton gradient across the membrane. The alpha chain is a regulatory subunit. The protein is ATP synthase subunit alpha of Coxiella burnetii (strain CbuK_Q154) (Coxiella burnetii (strain Q154)).